We begin with the raw amino-acid sequence, 176 residues long: Variant surface antigen A (176 aa).

The signal sequence occupies residues 1–29 (MKKSIFSKKLLVSFGSLVALAAIPLIAIS). Residue cysteine 30 is the site of N-palmitoyl cysteine attachment. Cysteine 30 carries the S-diacylglycerol cysteine lipid modification. Positions 33–176 (TDNNSSQSQQ…TKTENTQHTS (144 aa)) are disordered. Low complexity predominate over residues 35–121 (NNSSQSQQPG…GSNSESGMNS (87 aa)). The stretch at 123-135 (KTENTQQSEAPGT) is repeat 1. The 2.5 X 13 AA repeats stretch occupies residues 123–176 (KTENTQQSEAPGTNTGNKTTSESNSESGMNSEKTENTQQSEAPGTKTENTQHTS). Residues 126-142 (NTQQSEAPGTNTGNKTT) show a composition bias toward polar residues. Low complexity predominate over residues 143–153 (SESNSESGMNS). Residues 155 to 167 (KTENTQQSEAPGT) form repeat 2. Over residues 158–176 (NTQQSEAPGTKTENTQHTS) the composition is skewed to polar residues. The 3; truncated repeat unit spans residues 168–176 (KTENTQHTS).

It localises to the cell membrane. Functionally, responsible for the antigenic diversity for host adaptation. The protein is Variant surface antigen A (vlpA) of Mesomycoplasma hyorhinis (Mycoplasma hyorhinis).